Reading from the N-terminus, the 352-residue chain is Coproporphyrin III ferrochelatase (352 aa).

Residues S52 and Y121 each contribute to the Fe-coproporphyrin III site. Fe(2+) contacts are provided by H178 and E267.

The protein belongs to the ferrochelatase family.

Its subcellular location is the cytoplasm. It carries out the reaction Fe-coproporphyrin III + 2 H(+) = coproporphyrin III + Fe(2+). It participates in porphyrin-containing compound metabolism; protoheme biosynthesis. Functionally, involved in coproporphyrin-dependent heme b biosynthesis. Catalyzes the insertion of ferrous iron into coproporphyrin III to form Fe-coproporphyrin III. This is Coproporphyrin III ferrochelatase from Propionibacterium freudenreichii subsp. freudenreichii.